Here is a 271-residue protein sequence, read N- to C-terminus: Aspartate/glutamate leucyltransferase (271 aa).

Belongs to the R-transferase family. Bpt subfamily.

It is found in the cytoplasm. The catalysed reaction is N-terminal L-glutamyl-[protein] + L-leucyl-tRNA(Leu) = N-terminal L-leucyl-L-glutamyl-[protein] + tRNA(Leu) + H(+). It catalyses the reaction N-terminal L-aspartyl-[protein] + L-leucyl-tRNA(Leu) = N-terminal L-leucyl-L-aspartyl-[protein] + tRNA(Leu) + H(+). Functionally, functions in the N-end rule pathway of protein degradation where it conjugates Leu from its aminoacyl-tRNA to the N-termini of proteins containing an N-terminal aspartate or glutamate. This chain is Aspartate/glutamate leucyltransferase, found in Acinetobacter baylyi (strain ATCC 33305 / BD413 / ADP1).